Reading from the N-terminus, the 91-residue chain is MARSAKKGFYVEASLMKKVVNAIESKSKKPIKTWSRRSTIFPEFVGFTFQVHNGRQFIDVYVTDDMVGHKLGEFSPTRTYTGHGSEKGKKK.

Residues 72–91 (GEFSPTRTYTGHGSEKGKKK) form a disordered region.

This sequence belongs to the universal ribosomal protein uS19 family.

Its function is as follows. Protein S19 forms a complex with S13 that binds strongly to the 16S ribosomal RNA. The polypeptide is Small ribosomal subunit protein uS19 (Mycoplasma mobile (strain ATCC 43663 / 163K / NCTC 11711) (Mesomycoplasma mobile)).